The following is a 63-amino-acid chain: Large ribosomal subunit protein uL29 (63 aa).

Belongs to the universal ribosomal protein uL29 family.

The polypeptide is Large ribosomal subunit protein uL29 (Bdellovibrio bacteriovorus (strain ATCC 15356 / DSM 50701 / NCIMB 9529 / HD100)).